The chain runs to 485 residues: Poly(ADP-ribose) glycohydrolase 2 (485 aa).

This sequence belongs to the poly(ADP-ribose) glycohydrolase family. Expressed in head and tail neurons.

The protein resides in the cytoplasm. The catalysed reaction is [(1''-&gt;2')-ADP-alpha-D-ribose](n) + H2O = [(1''-&gt;2')-ADP-alpha-D-ribose](n-1) + ADP-D-ribose. Its function is as follows. Poly(ADP-ribose) synthesized after DNA damage is only present transiently and is rapidly degraded by poly(ADP-ribose) glycohydrolase. Poly(ADP-ribose) metabolism may be required for maintenance of the normal function of neuronal cells. The protein is Poly(ADP-ribose) glycohydrolase 2 of Caenorhabditis elegans.